The chain runs to 258 residues: 5-oxoprolinase subunit A (258 aa).

This sequence belongs to the LamB/PxpA family. As to quaternary structure, forms a complex composed of PxpA, PxpB and PxpC.

It catalyses the reaction 5-oxo-L-proline + ATP + 2 H2O = L-glutamate + ADP + phosphate + H(+). Its function is as follows. Catalyzes the cleavage of 5-oxoproline to form L-glutamate coupled to the hydrolysis of ATP to ADP and inorganic phosphate. This is 5-oxoprolinase subunit A from Deinococcus radiodurans (strain ATCC 13939 / DSM 20539 / JCM 16871 / CCUG 27074 / LMG 4051 / NBRC 15346 / NCIMB 9279 / VKM B-1422 / R1).